The sequence spans 433 residues: Inositol hexakisphosphate kinase 1 (433 aa).

A disordered region spans residues 100-160 (ETVEQDDTPE…SPKVELHSHS (61 aa)). The span at 113–123 (PRRKHSRRSLH) shows a compositional bias: basic residues. A compositionally biased stretch (polar residues) spans 139 to 149 (SFETSESSQEA). The span at 150-160 (KSPKVELHSHS) shows a compositional bias: basic and acidic residues. Phosphoserine is present on S151. 220 to 228 (PCVLDLKMG) is a substrate binding site. The tract at residues 359–383 (EVPPPCGPSTSPSSTSLEAGPSSPP) is disordered.

It belongs to the inositol phosphokinase (IPK) family. As to expression, highly expressed in brain and testis. Detected at much lower levels in heart, kidney, liver, lung and spleen.

Its subcellular location is the cytoplasm. It is found in the nucleus. It catalyses the reaction 1D-myo-inositol hexakisphosphate + ATP = 5-diphospho-1D-myo-inositol 1,2,3,4,6-pentakisphosphate + ADP. The catalysed reaction is 1-diphospho-1D-myo-inositol 2,3,4,5,6-pentakisphosphate + ATP + H(+) = 1,5-bis(diphospho)-1D-myo-inositol 2,3,4,6-tetrakisphosphate + ADP. Functionally, converts inositol hexakisphosphate (InsP6) to diphosphoinositol pentakisphosphate (InsP7/PP-InsP5). Converts 1,3,4,5,6-pentakisphosphate (InsP5) to PP-InsP4. The chain is Inositol hexakisphosphate kinase 1 (Ip6k1) from Mus musculus (Mouse).